The chain runs to 227 residues: Cytochrome c oxidase subunit 2 (227 aa).

Over 1–14 (MAYPVQLGFQDAAS) the chain is Mitochondrial intermembrane. The helical transmembrane segment at 15–45 (PIMEELLYFHDHTLMIVFLISSLVLYIISLM) threads the bilayer. Topologically, residues 46–59 (LTTKLMHTSTMDAQ) are mitochondrial matrix. A helical membrane pass occupies residues 60 to 87 (EVETVWTILPAIILILIALPSLRILYMM). Topologically, residues 88-227 (DEITTPSLTL…HFEEWLLSMF (140 aa)) are mitochondrial intermembrane. His-161, Cys-196, Glu-198, Cys-200, His-204, and Met-207 together coordinate Cu cation. Mg(2+) is bound at residue Glu-198.

The protein belongs to the cytochrome c oxidase subunit 2 family. In terms of assembly, component of the cytochrome c oxidase (complex IV, CIV), a multisubunit enzyme composed of 14 subunits. The complex is composed of a catalytic core of 3 subunits MT-CO1, MT-CO2 and MT-CO3, encoded in the mitochondrial DNA, and 11 supernumerary subunits COX4I, COX5A, COX5B, COX6A, COX6B, COX6C, COX7A, COX7B, COX7C, COX8 and NDUFA4, which are encoded in the nuclear genome. The complex exists as a monomer or a dimer and forms supercomplexes (SCs) in the inner mitochondrial membrane with NADH-ubiquinone oxidoreductase (complex I, CI) and ubiquinol-cytochrome c oxidoreductase (cytochrome b-c1 complex, complex III, CIII), resulting in different assemblies (supercomplex SCI(1)III(2)IV(1) and megacomplex MCI(2)III(2)IV(2)). Found in a complex with TMEM177, COA6, COX18, COX20, SCO1 and SCO2. Interacts with TMEM177 in a COX20-dependent manner. Interacts with COX20. Interacts with COX16. The cofactor is Cu cation.

It is found in the mitochondrion inner membrane. It catalyses the reaction 4 Fe(II)-[cytochrome c] + O2 + 8 H(+)(in) = 4 Fe(III)-[cytochrome c] + 2 H2O + 4 H(+)(out). Its function is as follows. Component of the cytochrome c oxidase, the last enzyme in the mitochondrial electron transport chain which drives oxidative phosphorylation. The respiratory chain contains 3 multisubunit complexes succinate dehydrogenase (complex II, CII), ubiquinol-cytochrome c oxidoreductase (cytochrome b-c1 complex, complex III, CIII) and cytochrome c oxidase (complex IV, CIV), that cooperate to transfer electrons derived from NADH and succinate to molecular oxygen, creating an electrochemical gradient over the inner membrane that drives transmembrane transport and the ATP synthase. Cytochrome c oxidase is the component of the respiratory chain that catalyzes the reduction of oxygen to water. Electrons originating from reduced cytochrome c in the intermembrane space (IMS) are transferred via the dinuclear copper A center (CU(A)) of subunit 2 and heme A of subunit 1 to the active site in subunit 1, a binuclear center (BNC) formed by heme A3 and copper B (CU(B)). The BNC reduces molecular oxygen to 2 water molecules using 4 electrons from cytochrome c in the IMS and 4 protons from the mitochondrial matrix. The sequence is that of Cytochrome c oxidase subunit 2 (MT-CO2) from Propithecus tattersalli (Golden-crowned Sifaka).